We begin with the raw amino-acid sequence, 332 residues long: Receptor polysaccharide phosphotransferase WefC (332 aa).

This sequence belongs to the stealth family.

In Streptococcus oralis, this protein is Receptor polysaccharide phosphotransferase WefC (wefC).